The following is a 352-amino-acid chain: Uricase (352 aa).

The segment at Met-1 to Tyr-32 is disordered. Over residues Met-23–Tyr-32 the composition is skewed to basic and acidic residues. Active-site charge relay system residues include Lys-41 and Thr-86. The urate site is built by Thr-86, Asp-87, Phe-214, Arg-231, Val-279, Gln-280, and Asn-306. The active-site Charge relay system is the His-308. A Microbody targeting signal motif is present at residues Ser-350 to Leu-352.

It belongs to the uricase family. In terms of tissue distribution, malpighian tubules.

It localises to the peroxisome. The catalysed reaction is urate + O2 + H2O = 5-hydroxyisourate + H2O2. It functions in the pathway purine metabolism; urate degradation; (S)-allantoin from urate: step 1/3. Its activity is regulated as follows. Repressed by 20-hydroxyecdysone. Catalyzes the oxidation of uric acid to 5-hydroxyisourate, which is further processed to form (S)-allantoin. The polypeptide is Uricase (Uro) (Drosophila melanogaster (Fruit fly)).